Here is a 305-residue protein sequence, read N- to C-terminus: Acyl transferase (305 aa).

Residues Ser-114, Asp-211, and His-241 each act as charge relay system in the active site.

The protein belongs to the LuxD family.

It functions in the pathway lipid metabolism; fatty acid reduction for biolumincescence. In terms of biological role, acyl transferase is part of the fatty acid reductase system required for aldehyde biosynthesis; it produces fatty acids for the luminescent reaction. The sequence is that of Acyl transferase from Vibrio campbellii (strain ATCC BAA-1116).